Here is a 202-residue protein sequence, read N- to C-terminus: Protein-methionine-sulfoxide reductase heme-binding subunit MsrQ (202 aa).

The next 5 membrane-spanning stretches (helical) occupy residues 8–28, 82–102, 116–136, 149–169, and 171–191; these read IVWL…WLFW, LWCF…ELGI, PYLT…VTST, LLHN…LWSV, and IVSP…TWRY.

It belongs to the MsrQ family. In terms of assembly, heterodimer of a catalytic subunit (MsrP) and a heme-binding subunit (MsrQ). FMN serves as cofactor. The cofactor is heme b.

Its subcellular location is the cell inner membrane. Functionally, part of the MsrPQ system that repairs oxidized periplasmic proteins containing methionine sulfoxide residues (Met-O), using respiratory chain electrons. Thus protects these proteins from oxidative-stress damage caused by reactive species of oxygen and chlorine generated by the host defense mechanisms. MsrPQ is essential for the maintenance of envelope integrity under bleach stress, rescuing a wide series of structurally unrelated periplasmic proteins from methionine oxidation. MsrQ provides electrons for reduction to the reductase catalytic subunit MsrP, using the quinone pool of the respiratory chain. This is Protein-methionine-sulfoxide reductase heme-binding subunit MsrQ from Klebsiella pneumoniae subsp. pneumoniae (strain ATCC 700721 / MGH 78578).